A 281-amino-acid chain; its full sequence is uncharacterized protein (281 aa).

The next 8 membrane-spanning stretches (helical) occupy residues 30–50, 54–74, 76–96, 106–126, 153–173, 198–218, 235–255, and 259–279; these read AIVASLLVSLACGLIGSFIVI, VFISGGVAHAAYGGIGLGYYF, FNPLWGAFVFSLVMALAMGWV, TLIGVMWALGMAIGIMLIDLT, AGLDMLIIILLFLLYKEFLAI, IALTVVMVMQLVGLIMVIALL, MMAVASGLGMVFCGVGLALSY, and LSSGATIILVASIAYLISLAF.

Belongs to the ABC-3 integral membrane protein family.

It is found in the cell membrane. This is an uncharacterized protein from Synechocystis sp. (strain ATCC 27184 / PCC 6803 / Kazusa).